Reading from the N-terminus, the 247-residue chain is Probable transcriptional regulatory protein EUBELI_00902 (247 aa).

It belongs to the TACO1 family.

It is found in the cytoplasm. The chain is Probable transcriptional regulatory protein EUBELI_00902 from Lachnospira eligens (strain ATCC 27750 / DSM 3376 / VPI C15-48 / C15-B4) (Eubacterium eligens).